A 91-amino-acid chain; its full sequence is Cell division protein FtsB (91 aa).

Residues 1-3 (MRW) lie on the Cytoplasmic side of the membrane. Residues 4-21 (PLIVLAVLVIVLQYPLWL) traverse the membrane as a helical segment. Residues 22–91 (GKGGWLRVWD…EIFVHTPRKP (70 aa)) are Periplasmic-facing. Residues 28–74 (RVWDVDRQLQAQRETNQRLEQRNAGLEAEVRDLKSGNEAVEERARFE) are a coiled coil.

It belongs to the FtsB family. In terms of assembly, part of a complex composed of FtsB, FtsL and FtsQ.

The protein localises to the cell inner membrane. Functionally, essential cell division protein. May link together the upstream cell division proteins, which are predominantly cytoplasmic, with the downstream cell division proteins, which are predominantly periplasmic. This is Cell division protein FtsB from Aromatoleum aromaticum (strain DSM 19018 / LMG 30748 / EbN1) (Azoarcus sp. (strain EbN1)).